The following is an 884-amino-acid chain: Alanine--tRNA ligase (884 aa).

Zn(2+)-binding residues include His-572, His-576, Cys-673, and His-677.

This sequence belongs to the class-II aminoacyl-tRNA synthetase family. Zn(2+) serves as cofactor.

Its subcellular location is the cytoplasm. The catalysed reaction is tRNA(Ala) + L-alanine + ATP = L-alanyl-tRNA(Ala) + AMP + diphosphate. Catalyzes the attachment of alanine to tRNA(Ala) in a two-step reaction: alanine is first activated by ATP to form Ala-AMP and then transferred to the acceptor end of tRNA(Ala). Also edits incorrectly charged Ser-tRNA(Ala) and Gly-tRNA(Ala) via its editing domain. The protein is Alanine--tRNA ligase of Xylella fastidiosa (strain 9a5c).